The sequence spans 262 residues: Polyamine aminopropyltransferase (262 aa).

In terms of domain architecture, PABS spans 1 to 249 (MWITQEITPY…DIHRAAFALP (249 aa)). S-methyl-5'-thioadenosine is bound at residue Asn29. Asp83 serves as a coordination point for spermidine. Asp155 functions as the Proton acceptor in the catalytic mechanism.

Belongs to the spermidine/spermine synthase family. Homodimer or homotetramer.

The protein resides in the cytoplasm. It catalyses the reaction S-adenosyl 3-(methylsulfanyl)propylamine + putrescine = S-methyl-5'-thioadenosine + spermidine + H(+). Its pathway is amine and polyamine biosynthesis; spermidine biosynthesis; spermidine from putrescine: step 1/1. Functionally, catalyzes the irreversible transfer of a propylamine group from the amino donor S-adenosylmethioninamine (decarboxy-AdoMet) to putrescine (1,4-diaminobutane) to yield spermidine. In Helicobacter pylori (strain P12), this protein is Polyamine aminopropyltransferase.